The primary structure comprises 105 residues: Large ribosomal subunit protein eL42 (105 aa).

The disordered stretch occupies residues 23-61; the sequence is KVTQYKKGKESKFAQGRRRYDRKQSGFGGQTKPIFRKKA.

It belongs to the eukaryotic ribosomal protein eL42 family.

This Caenorhabditis elegans protein is Large ribosomal subunit protein eL42.